Here is a 217-residue protein sequence, read N- to C-terminus: Tegument protein BKRF4 (217 aa).

Residues 1 to 217 (MAMFLKSRGV…GNNNYNWPWL (217 aa)) form a disordered region. Over residues 32–42 (YTLGSQASQSI) the composition is skewed to polar residues. Residues 43–79 (QEEDVSDTDESDYSDEDEEIDLEEEYPSDEDPSEGSD) are compositionally biased toward acidic residues. Residues 63 to 64 (DL) are interaction with host histones H3/H4. Residues 81-84 (DPSW) form an interaction with host H2A/H2B region. Over residues 89-102 (SDESDYSESDEDEA) the composition is skewed to acidic residues. Residues 106-132 (SQASRSSRVSPSTQQSSGLTPTPSFSR) show a composition bias toward low complexity. Positions 136–145 (RAPPRPPAPA) are enriched in pro residues. A compositionally biased stretch (polar residues) spans 208 to 217 (GNNNYNWPWL).

Belongs to the lymphocryptovirus BKRF4 family. Forms a complex with the host H3/H4 dimer and histone chaperone ASF1. Also forms a complex with host H2A/H2B dimer. Interacts (via C-terminus) with BGLF2; this interaction is important for infectious virion production.

The protein resides in the virion tegument. The protein localises to the host nucleus. It localises to the host cytoplasm. Its subcellular location is the host perinuclear region. Functionally, histone-binding protein that binds to histones H2A/H2B, H3/H4 and cellular chromatin to overcome the host DNA damage response triggered by the viral genome ends. Interferes with histone ubiquitination and recruitment of repair proteins. The polypeptide is Tegument protein BKRF4 (Epstein-Barr virus (strain GD1) (HHV-4)).